Consider the following 459-residue polypeptide: Exodeoxyribonuclease 7 large subunit (459 aa).

The protein belongs to the XseA family. As to quaternary structure, heterooligomer composed of large and small subunits.

The protein resides in the cytoplasm. The enzyme catalyses Exonucleolytic cleavage in either 5'- to 3'- or 3'- to 5'-direction to yield nucleoside 5'-phosphates.. Functionally, bidirectionally degrades single-stranded DNA into large acid-insoluble oligonucleotides, which are then degraded further into small acid-soluble oligonucleotides. The chain is Exodeoxyribonuclease 7 large subunit from Yersinia pseudotuberculosis serotype IB (strain PB1/+).